We begin with the raw amino-acid sequence, 142 residues long: Putative pre-16S rRNA nuclease (142 aa).

This sequence belongs to the YqgF nuclease family.

Its subcellular location is the cytoplasm. Could be a nuclease involved in processing of the 5'-end of pre-16S rRNA. The protein is Putative pre-16S rRNA nuclease of Staphylococcus saprophyticus subsp. saprophyticus (strain ATCC 15305 / DSM 20229 / NCIMB 8711 / NCTC 7292 / S-41).